A 157-amino-acid chain; its full sequence is Anaerobic nitrite reductase Hb1 (157 aa).

Positions 5–154 (GFTEEQEALV…LAEAIKSEMK (150 aa)) constitute a Globin domain. Positions 38-42 (EIAPA) match the Homodimerization motif. S48, K62, H66, R96, T100, and H101 together coordinate heme b. The short motif at 108 to 120 (AEHFEVTKLALLE) is the Homodimerization element.

It belongs to the plant globin family. As to quaternary structure, homodimer. Heme b serves as cofactor. In terms of tissue distribution, predominantly expressed in leaves, to a lower extent in roots, and barely in stems, flowers and seeds.

Its subcellular location is the cytoplasm. The protein resides in the nucleus. The enzyme catalyses Fe(III)-heme b-[protein] + nitric oxide + H2O = Fe(II)-heme b-[protein] + nitrite + 2 H(+). In terms of biological role, phytoglobin that reduces nitrite to nitric oxide (NO) under anoxic conditions (e.g. during flooding or in waterlogged soil) and upon root nodulation. Required for general plant development and during nodulation, especially for the onset of symbiosis. Monitors nitric oxide (NO) levels during early phase of the nitrogen-fixing symbiosis and buffers oxygen in functioning nodules. May not function as an oxygen storage or transport protein. Has an unusually high affinity for O(2) through a hexacoordinate heme iron because of a very low dissociation constant. Involved in water stress tolerance. This is Anaerobic nitrite reductase Hb1 from Glycine max (Soybean).